We begin with the raw amino-acid sequence, 846 residues long: Protein arginine N-methyltransferase 9 (846 aa).

TPR repeat units lie at residues 25 to 58, 67 to 100, and 101 to 134; these read VARS…APEL, QYTL…FPDD, and EVIC…NPDF. SAM-dependent MTase PRMT-type domains follow at residues 137-466 and 530-846; these read AKEN…YLRI and NIPY…AVKP.

Belongs to the class I-like SAM-binding methyltransferase superfamily. Protein arginine N-methyltransferase family. In terms of assembly, found in a complex with PRMT9, SF3B2 and SF3B4. Interacts with SF3B2.

It is found in the cytoplasm. It catalyses the reaction L-arginyl-[protein] + 2 S-adenosyl-L-methionine = N(omega),N(omega)'-dimethyl-L-arginyl-[protein] + 2 S-adenosyl-L-homocysteine + 2 H(+). Functionally, arginine methyltransferase that can both catalyze the formation of omega-N monomethylarginine (MMA) and symmetrical dimethylarginine (sDMA). Specifically mediates the symmetrical dimethylation of SF3B2. Involved in the regulation of alternative splicing of pre-mRNA. This chain is Protein arginine N-methyltransferase 9 (Prmt9), found in Mus musculus (Mouse).